The following is a 426-amino-acid chain: Phosphomethylpyrimidine synthase (426 aa).

Substrate-binding positions include Asn65, Met94, Tyr123, His162, 184–186 (SRG), 225–228 (DGMR), and Glu264. His268 contacts Zn(2+). Tyr291 contacts substrate. His332 contacts Zn(2+). Positions 408, 411, and 415 each coordinate [4Fe-4S] cluster.

The protein belongs to the ThiC family. [4Fe-4S] cluster is required as a cofactor.

It carries out the reaction 5-amino-1-(5-phospho-beta-D-ribosyl)imidazole + S-adenosyl-L-methionine = 4-amino-2-methyl-5-(phosphooxymethyl)pyrimidine + CO + 5'-deoxyadenosine + formate + L-methionine + 3 H(+). Its pathway is cofactor biosynthesis; thiamine diphosphate biosynthesis. Catalyzes the synthesis of the hydroxymethylpyrimidine phosphate (HMP-P) moiety of thiamine from aminoimidazole ribotide (AIR) in a radical S-adenosyl-L-methionine (SAM)-dependent reaction. The chain is Phosphomethylpyrimidine synthase from Methanocaldococcus jannaschii (strain ATCC 43067 / DSM 2661 / JAL-1 / JCM 10045 / NBRC 100440) (Methanococcus jannaschii).